Reading from the N-terminus, the 603-residue chain is Terpenoid synthase 25 (603 aa).

Mg(2+) contacts are provided by D356, D360, N500, T504, and E508. The DDXXD motif signature appears at 356 to 360; that stretch reads DDTCD.

It belongs to the terpene synthase family. Tpsa subfamily. Requires Mg(2+) as cofactor. It depends on Mn(2+) as a cofactor. As to expression, predominantly expressed in roots but also in flowers.

It localises to the cytoplasm. It participates in secondary metabolite biosynthesis; terpenoid biosynthesis. Its function is as follows. Involved in terpene biosynthesis in roots. Possesses sesquiterpene (C15) synthase activity in vitro. Does not seem to be involved in diterpene (C20) biosynthesis. In Arabidopsis thaliana (Mouse-ear cress), this protein is Terpenoid synthase 25.